The chain runs to 712 residues: MTPHVMKRDGCKVPFKSERIKEAILRAAKAAGVDDADYCATVAEVVSSQMNARSQVDINEIQTAVENQLMSGPYKQLARAYIEYRHDRDIQREKRGRLNQEIRGLVEQTNSALLNENANKDSKVIPTQRDLLAGIVAKHYARQHLLPRDVVQAHERGDIHYHDLDYSPFFPMFNCMLIDLKGMLTQGFKMGNAEIEPPKSISTATAVTAQIIAQVASHIYGGTTINRIDEVLAPFVTESYNKHRKTADEWQIPDAEGYARSRTEKECYDAFQSLEYEVNTLHTANGQTPFVTFGFGLGTSWESRLIQASILRNRIAGLGKNRKTAVFPKLVFAIRDGLNHKFGDPNYDIKQLALECASKRMYPDILNYDQVVKVTGSFKTPMGCRSFLGVWENENGEQIHDGRNNLGVISLNLPRIALEAKGDETAFWKLLDERLALARKALMTRIARLEGVKARVAPILYMEGACGVRLKADDDVSEIFKNGRASISLGYIGIHETINALFGGEHLYDSEQLRAKGIAIVERLRQAVDQWKDETGYGFSLYSTPSENLCDRFCRLDTAEFGVVPGVTDKGYYTNSFHLDVEKKVNPYDKIDFEAPYPPLANGGFICYGEYPNIQHNLKALEDVWDYSYQHVPYYGTNTPIDECYECGFTGEFECTSKGFTCPKCGNHDAARVSVTRRVCGYLGSPDARPFNAGKQEEVKRRVKHLGNGQIG.

One can recognise an ATP-cone domain in the interval 3-92 (PHVMKRDGCK…EYRHDRDIQR (90 aa)). In terms of domain architecture, Glycine radical spans 583–708 (KKVNPYDKID…VKRRVKHLGN (126 aa)). Residues Cys644, Cys647, Cys662, and Cys665 each coordinate Zn(2+). Gly681 carries the post-translational modification Glycine radical.

The protein belongs to the anaerobic ribonucleoside-triphosphate reductase family. Forms a tetramer composed of two NrdD and two NrdG subunits.

The enzyme catalyses a ribonucleoside 5'-triphosphate + formate + H(+) = a 2'-deoxyribonucleoside 5'-triphosphate + CO2 + H2O. Activated under anaerobic conditions by NrdG, a tightly associated activase. Activation involves the formation of a glycyl radical at Gly-681. Catalyzes the conversion of ribonucleotides into deoxyribonucleotides, which are required for DNA synthesis and repair. The protein is Anaerobic ribonucleoside-triphosphate reductase (nrdD) of Salmonella typhimurium (strain LT2 / SGSC1412 / ATCC 700720).